Here is a 316-residue protein sequence, read N- to C-terminus: Acetaldehyde dehydrogenase (316 aa).

11 to 14 (SGNI) is an NAD(+) binding site. Cysteine 131 acts as the Acyl-thioester intermediate in catalysis. NAD(+) contacts are provided by residues 162–170 (SAGPGTRAN) and asparagine 289.

The protein belongs to the acetaldehyde dehydrogenase family. Interacts with MhpE.

The enzyme catalyses acetaldehyde + NAD(+) + CoA = acetyl-CoA + NADH + H(+). It participates in aromatic compound metabolism; 3-phenylpropanoate degradation. Catalyzes the conversion of acetaldehyde to acetyl-CoA, using NAD(+) and coenzyme A. Is the final enzyme in the meta-cleavage pathway for the degradation of aromatic compounds. In Klebsiella pneumoniae (strain 342), this protein is Acetaldehyde dehydrogenase.